A 406-amino-acid chain; its full sequence is MAEKTEKPTAKKLRDAAKKGQTFKARDIVALIVIATGALAAPALVDLTRIAAEFVRIASTGAQPNPGAYAFAWAKLFLRIAAPFVLLCAAAGALPSLVQSRFTLAVESIRFDLTALDPVKGMKRLFSWRSAKDAVKALLYVGVFALTVRVFAGLYHADVFGLFRARPALLGHMWIVLTVRLVLLFLLCALPVLILDAAVEYFLYHRELKMDKHEVKQEYKESEGNHEIKSKRREIHQELLSEEIKANVEQSDFIVANPTHIAIGVYVNPDIVPIPFVSVRETNARALAVIRHAEACGVPVVRNVALARSIYRNSPRRYSFVSHDDIDGVMRVLIWLGEVEAANRGGPPPETRAPTSAEPQARDGVAPPGDACADNAFPDDAPPGAAAPNAGSPDGGAPARTGDQNA.

The next 4 membrane-spanning stretches (helical) occupy residues 28-48, 80-100, 137-157, and 175-195; these read IVAL…VDLT, IAAP…LVQS, ALLY…LYHA, and IVLT…VLIL. Residues 341–406 are disordered; that stretch reads AANRGGPPPE…APARTGDQNA (66 aa). Residues 370-399 show a composition bias toward low complexity; the sequence is DACADNAFPDDAPPGAAAPNAGSPDGGAPA.

This sequence belongs to the type III secretion exporter family.

The protein localises to the cell membrane. Functionally, part of the bsa type III secretion system, is involved in the intracellular replication of invading bacteria inside the host cell. Probably necessary for the lysis of the vacuole membrane and escape into the host cell cytoplasm. The sequence is that of Secretion apparatus protein BsaZ (bsaZ) from Burkholderia pseudomallei (strain 668).